The chain runs to 74 residues: ATP synthase subunit c (74 aa).

Transmembrane regions (helical) follow at residues 8-28 and 52-72; these read FIGV…VSNI and IGAG…MLLI.

This sequence belongs to the ATPase C chain family. In terms of assembly, F-type ATPases have 2 components, F(1) - the catalytic core - and F(0) - the membrane proton channel. F(1) has five subunits: alpha(3), beta(3), gamma(1), delta(1), epsilon(1). F(0) has three main subunits: a(1), b(2) and c(10-14). The alpha and beta chains form an alternating ring which encloses part of the gamma chain. F(1) is attached to F(0) by a central stalk formed by the gamma and epsilon chains, while a peripheral stalk is formed by the delta and b chains.

It is found in the cell inner membrane. Functionally, f(1)F(0) ATP synthase produces ATP from ADP in the presence of a proton or sodium gradient. F-type ATPases consist of two structural domains, F(1) containing the extramembraneous catalytic core and F(0) containing the membrane proton channel, linked together by a central stalk and a peripheral stalk. During catalysis, ATP synthesis in the catalytic domain of F(1) is coupled via a rotary mechanism of the central stalk subunits to proton translocation. Key component of the F(0) channel; it plays a direct role in translocation across the membrane. A homomeric c-ring of between 10-14 subunits forms the central stalk rotor element with the F(1) delta and epsilon subunits. This Rickettsia canadensis (strain McKiel) protein is ATP synthase subunit c.